The sequence spans 273 residues: Ribosomal RNA small subunit methyltransferase A (273 aa).

S-adenosyl-L-methionine-binding residues include Asn18, Leu20, Gly45, Glu66, Asp91, and Asn113.

This sequence belongs to the class I-like SAM-binding methyltransferase superfamily. rRNA adenine N(6)-methyltransferase family. RsmA subfamily.

It localises to the cytoplasm. The enzyme catalyses adenosine(1518)/adenosine(1519) in 16S rRNA + 4 S-adenosyl-L-methionine = N(6)-dimethyladenosine(1518)/N(6)-dimethyladenosine(1519) in 16S rRNA + 4 S-adenosyl-L-homocysteine + 4 H(+). Its function is as follows. Specifically dimethylates two adjacent adenosines (A1518 and A1519) in the loop of a conserved hairpin near the 3'-end of 16S rRNA in the 30S particle. May play a critical role in biogenesis of 30S subunits. The chain is Ribosomal RNA small subunit methyltransferase A from Salmonella schwarzengrund (strain CVM19633).